A 198-amino-acid chain; its full sequence is HTH-type transcriptional regulator BetI (198 aa).

The 61-residue stretch at 8–68 folds into the HTH tetR-type domain; it reads PLRRRELIDA…ATMRHLLREL (61 aa). A DNA-binding region (H-T-H motif) is located at residues 31 to 50; sequence TVAQIAHEAGVSPALAHHYF.

The protein operates within amine and polyamine biosynthesis; betaine biosynthesis via choline pathway [regulation]. Its function is as follows. Repressor involved in the biosynthesis of the osmoprotectant glycine betaine. It represses transcription of the choline transporter BetT and the genes of BetAB involved in the synthesis of glycine betaine. The polypeptide is HTH-type transcriptional regulator BetI (Brucella suis (strain ATCC 23445 / NCTC 10510)).